Consider the following 418-residue polypeptide: Transcription termination factor Rho (418 aa).

The Rho RNA-BD domain maps to 48–123 (SIFGEGTLEV…VKVDKVNGEA (76 aa)). ATP is bound by residues 169-174 (GKGQRA), 181-186 (KSGKTV), and Arg212.

It belongs to the Rho family. Homohexamer. The homohexamer assembles into an open ring structure.

Functionally, facilitates transcription termination by a mechanism that involves Rho binding to the nascent RNA, activation of Rho's RNA-dependent ATPase activity, and release of the mRNA from the DNA template. The protein is Transcription termination factor Rho of Chromobacterium violaceum (strain ATCC 12472 / DSM 30191 / JCM 1249 / CCUG 213 / NBRC 12614 / NCIMB 9131 / NCTC 9757 / MK).